Reading from the N-terminus, the 150-residue chain is Large ribosomal subunit protein uL13 (150 aa).

Belongs to the universal ribosomal protein uL13 family. Part of the 50S ribosomal subunit.

This protein is one of the early assembly proteins of the 50S ribosomal subunit, although it is not seen to bind rRNA by itself. It is important during the early stages of 50S assembly. The sequence is that of Large ribosomal subunit protein uL13 from Chlorobium phaeobacteroides (strain BS1).